The chain runs to 350 residues: Induced myeloid leukemia cell differentiation protein Mcl-1 (350 aa).

Glycyl lysine isopeptide (Lys-Gly) (interchain with G-Cter in ubiquitin) cross-links involve residues Lys-5 and Lys-40. Positions 47 to 87 are disordered; the sequence is EIGGGEAGAVIGGSAGASPPSTLTPDSRRVARPPPIGAEVP. The segment covering 50 to 61 has biased composition (gly residues); it reads GGEAGAVIGGSA. A PEST-like region spans residues 104–175; that stretch reads RAAPLEEMEA…PAEEEEDELY (72 aa). A Phosphoserine modification is found at Ser-121. Lys-136 participates in a covalent cross-link: Glycyl lysine isopeptide (Lys-Gly) (interchain with G-Cter in ubiquitin). The disordered stretch occupies residues 148–171; it reads GESGNNTSTDGSLPSTPPPAEEEE. The span at 150 to 161 shows a compositional bias: polar residues; the sequence is SGNNTSTDGSLP. Ser-159 bears the Phosphoserine; by GSK3-alpha and GSK3-beta mark. Ser-162 is subject to Phosphoserine. At Thr-163 the chain carries Phosphothreonine; by MAPK. Glycyl lysine isopeptide (Lys-Gly) (interchain with G-Cter in ubiquitin) cross-links involve residues Lys-194 and Lys-197. Positions 209–223 match the BH3 motif; sequence ALETLRRVGDGVQRN. The BH1 signature appears at 252–272; the sequence is HVFSDGVTNWGRIVTLISFGA. The BH2 motif lies at 304 to 319; it reads DWLVKQRGWDGFVEFF. The helical transmembrane segment at 328–348 threads the bilayer; sequence IRNVLLAFAGVAGVGAGLAYL.

It belongs to the Bcl-2 family. As to quaternary structure, interacts with HIF3A (via C-terminus domain). Interacts with BAD, BOK, BIK and BMF. Interacts with PMAIP1. Interacts with BBC3. Isoform 1 interacts with BAX, BAK1 and TPT1. Heterodimer of isoform 1 and isoform 2. Homodimers of isoform 1 or isoform 2 are not detected. Isoform 2 does not interact with pro-apoptotic BCL2-related proteins. Interacts with RTL10/BOP. Interacts with BCL2L11; may sequester BCL2L11 to prevent its pro-apoptotic activity. Interacts with GIMAP5 and HSPA8/HSC70; the interaction between HSPA8 and MCL1 is impaired in the absence of GIMAP5. In terms of processing, cleaved by CASP3 during apoptosis. In intact cells cleavage occurs preferentially after Asp-127, yielding a pro-apoptotic 28 kDa C-terminal fragment. Rapidly degraded in the absence of phosphorylation on Thr-163 in the PEST region. Post-translationally, phosphorylated on Ser-159, by GSK3, in response to IL3/interleukin-3 withdrawal. Phosphorylation at Ser-159 induces ubiquitination and proteasomal degradation, abrogating the anti-apoptotic activity. Treatment with taxol or okadaic acid induces phosphorylation on additional sites. In terms of processing, ubiquitinated. Ubiquitination is induced by phosphorylation at Ser-159. Deubiquitinated by USP20; leading to increased stability.

The protein resides in the membrane. It localises to the cytoplasm. It is found in the mitochondrion. The protein localises to the nucleus. Its subcellular location is the nucleoplasm. Its function is as follows. Involved in the regulation of apoptosis versus cell survival, and in the maintenance of viability but not of proliferation. Mediates its effects by interactions with a number of other regulators of apoptosis. Isoform 1 inhibits apoptosis. Isoform 2 promotes apoptosis. The protein is Induced myeloid leukemia cell differentiation protein Mcl-1 (MCL1) of Homo sapiens (Human).